The sequence spans 391 residues: 4-coumarate--CoA ligase (391 aa).

Belongs to the ATP-dependent AMP-binding enzyme family.

It carries out the reaction (E)-4-coumarate + ATP + CoA = (E)-4-coumaroyl-CoA + AMP + diphosphate. Functionally, converts p-coumaric acid into p-coumaryl CoA. This is necessary for the activation of the photoactive yellow protein (PYP) chromophore. This is 4-coumarate--CoA ligase (pcl) from Halorhodospira halophila (Ectothiorhodospira halophila).